A 342-amino-acid chain; its full sequence is C-X-C chemokine receptor type 6 (342 aa).

Topologically, residues 1–32 are extracellular; sequence MAEHDYHEDYGFSSFNDSSQEEHQDFLQFSKV. An N-linked (GlcNAc...) asparagine glycan is attached at Asn16. The helical transmembrane segment at 33-59 threads the bilayer; the sequence is FLPCMYLVVFVCGLVGNSLVLVISIFY. The Cytoplasmic portion of the chain corresponds to 60-68; sequence HKLQSLTDV. The helical transmembrane segment at 69–89 threads the bilayer; sequence FLVNLPLADLVFVCTLPFWAY. Residues 90-103 are Extracellular-facing; that stretch reads AGIHEWVFGQVMCK. Cys102 and Cys180 are joined by a disulfide. A helical transmembrane segment spans residues 104 to 125; the sequence is SLLGIYTINFYTSMLILTCITV. Topologically, residues 126 to 143 are cytoplasmic; it reads DRFIVVVKATKAYNQQAK. The helical transmembrane segment at 144–164 threads the bilayer; that stretch reads RMTWGKVTSLLIWVISLLVSL. Residues 165–187 lie on the Extracellular side of the membrane; the sequence is PQIIYGNVFNLDKLICGYHDEAI. The helical transmembrane segment at 188-215 threads the bilayer; it reads STVVLATQMTLGFFLPLLTMIVCYSVII. Residues 216-231 are Cytoplasmic-facing; sequence KTLLHAGGFQKHRSLK. A helical transmembrane segment spans residues 232 to 259; that stretch reads IIFLVMAVFLLTQMPFNLMKFIRSTHWE. At 260 to 275 the chain is on the extracellular side; the sequence is YYAMTSFHYTIMVTEA. The helical transmembrane segment at 276 to 293 threads the bilayer; that stretch reads IAYLRACLNPVLYAFVSL. Residues 294-342 lie on the Cytoplasmic side of the membrane; it reads KFRKNFWKLVKDIGCLPYLGVSHQWKSSEDNSKTFSASHNVEATSMFQL.

It belongs to the G-protein coupled receptor 1 family. As to expression, expressed in lymphoid tissues and activated T cells.

The protein localises to the cell membrane. Functionally, receptor for the C-X-C chemokine CXCL16. Used as a coreceptor by SIVs and by strains of HIV-2 and m-tropic HIV-1. In Homo sapiens (Human), this protein is C-X-C chemokine receptor type 6 (CXCR6).